The primary structure comprises 343 residues: Heat-inducible transcription repressor HrcA (343 aa).

It belongs to the HrcA family.

In terms of biological role, negative regulator of class I heat shock genes (grpE-dnaK-dnaJ and groELS operons). Prevents heat-shock induction of these operons. The protein is Heat-inducible transcription repressor HrcA of Mycobacterium avium (strain 104).